A 3388-amino-acid polypeptide reads, in one-letter code: MNDQRKKARNTPFNMLKRERNRVSTVQQLTKRFSLGMLQGRGPLKLFMALVAFLRFLTIPPTAGILKRWGTIKKSKAINVLRGFRKEIGRMLNILNRRRRTAGMIIMLIPTVMAFHLTTRNGEPHMIVSRQEKGKSLLFKTKDGTNMCTLMAMDLGELCEDTITYKCPFLKQNEPEDIDCWCNSTSTWVTYGTCTTTGEHRREKRSVALVPHVGMGLETRTETWMSSEGAWKHAQRIETWILRHPGFTIMAAILAYTIGTTHFQRVLIFILLTAIAPSMTMRCIGISNRDFVEGVSGGSWVDIVLEHGSCVTTMAKNKPTLDFELIKTEAKQPATLRKYCIEAKLTNTTTDSRCPTQGEPTLNEEQDKRFVCKHSMVDRGWGNGCGLFGKGGIVTCAMFTCKKNMEGKIVQPENLEYTVVITPHSGEEHAVGNDTGKHGKEVKITPQSSITEAELTGYGTVTMECSPRTGLDFNEMVLLQMKDKAWLVHRQWFLDLPLPWLPGADTQGSNWIQKETLVTFKNPHAKKQDVVVLGSQEGAMHTALTGATEIQMSSGNLLFTGHLKCRLRMDKLQLKGMSYSMCTGKFKVVKEIAETQHGTIVIRVQYEGDGSPCKTPFEIMDLEKRHVLGRLTTVNPIVTEKDSPVNIEAEPPFGDSYIIIGVEPGQLKLDWFKKGSSIGQMFETTMRGAKRMAILGDTAWDFGSLGGVFTSIGKALHQVFGAIYGAAFSGVSWTMKILIGVIITWIGMNSRSTSLSVSLVLVGIVTLYLGVMVQADSGCVVSWKNKELKCGSGIFVTDNVHTWTEQYKFQPESPSKLASAIQKAHEEGICGIRSVTRLENLMWKQITSELNHILSENEVKLTIMTGDIKGIMQVGKRSLRPQPTELRYSWKTWGKAKMLSTELHNQTFLIDGPETAECPNTNRAWNSLEVEDYGFGVFTTNIWLRLREKQDAFCDSKLMSAAIKDNRAVHADMGYWIESALNDTWKIEKASFIEVKSCHWPKSHTLWSNGVLESEMVIPKNFAGPVSQHNNRPGYHTQTAGPWHLGKLEMDFDFCEGTTVVVTEDCGNRGPSLRTTTASGKLITEWCCRSCTLPPLRYRGEDGCWYGMEIRPLKEKEENLVSSLVTAGHGQIDNFSLGILGMALFLEEMLRTRVGTKHAILLVAVSFVTLITGNMSFRDLGRVMVMVGATMTDDIGMGVTYLALLAAFKVRPTFAAGLLLRKLTSKELMMTTIGIVLLSQSSIPETILELTDALALGMMVLKMVRNMEKYQLAVTIMAILCVPNAVILQNAWKVSCTILAVVSVSPLFLTSSQQKADWIPLALTIKGLNPTAIFLTTLSRTSKKRSWPLNEAIMAVGMVSILASSLLKNDTPMTGPLVAGGLLTVCYVLTGRSADLELERATDVKWDDQAEISGSSPILSITISEDGSMSIKNEEEEQTLTILIRTGLLVISGLFPVSIPITAAAWYLWEVKKQRAGVLWDVPSPPPVGKAELEDGAYRIKQKGILGYSQIGAGVYKEGTFHTMWHVTRGAVLMHKGKRIEPSWADVKKDLISYGGGWKLEGEWKEGEEVQVLALEPGKNPRAVQTKPGLFRTNTGTIGAVSLDFSPGTSGSPIVDKKGKVVGLYGNGVVTRSGAYVSAIAQTEKSIEDNPEIEDDIFRKRRLTIMDLHPGAGKTKRYLPAIVREAIKRGLRTLILAPTRVVAAEMEEALRGLPIRYQTPAIRAEHTGREIVDLMCHATFTMRLLSPIRVPNYNLIIMDEAHFTDPASIAARGYISTRVEMGEAAGIFMTATPPGSRDPFPQSNAPIMDEEREIPERSWNSGHEWVTDFKGKTVWFVPSIKTGNDIAACLRKNGKRVIQLSRKTFDSEYVKTRTNDWDFVVTTDISEMGANFKAERVIDPRRCMKPVILTDGEERVILAGPMPVTHSSAAQRRGRIGRNPRNENDQYIYMGEPLENDEDCAHWKEAKMLLDNINTPEGIIPSMFEPEREKVDAIDGEYRLRGEARKTFVDLMRRGDLPVWLAYKVAAEGINYADRRWCFDGTRNNQILEENVEVEIWTKEGERKKLKPRWLDARIYSDPLALKEFAAGRKSLTLNLITEMGRLPTFMTQKARDALDNLAVLHTAEAGGKAYNHALSELPETLETLLLLTLLATVTGGIFLFLMSGRGIGKMTLGMCCIITASILLWYAQIQPHWIAASIILEFFLIVLLIPEPEKQRTPQDNQLTYVIIAILTVVAATMANEMGFLEKTKKDLGLGNIATQQPESNILDIDLRPASAWTLYAVATTFITPMLRHSIENSSVNVSLTAIANQATVLMGLGKGWPLSKMDIGVPLLAIGCYSQVNPITLTAALLLLVAHYAIIGPGLQAKATREAQKRAAAGIMKNPTVDGITVIDLDPIPYDPKFEKQLGQVMLLVLCVTQVLMMRTTWALCEALTLATGPVSTLWEGNPGRFWNTTIAVSMANIFRGSYLAGAGLLFSIMKNTTSTRRGTGNIGETLGEKWKSRLNALGKSEFQIYKKSGIQEVDRTLAKEGIKRGETDHHAVSRGSAKLRWFVERNLVTPEGKVVDLGCGRGGWSYYCGGLKNVREVKGLTKGGPGHEEPIPMSTYGWNLVRLQSGVDVFFVPPEKCDTLLCDIGESSPNPTVEAGRTLRVLNLVENWLNNNTQFCVKVLNPYMPSVIERMETLQRKYGGALVRNPLSRNSTHEMYWVSNASGNIVSSVNMISRMLINRFTMRHKKATYEPDVDLGSGTRNIGIESETPNLDIIGKRIEKIKQEHETSWHYDQDHPYKTWAYHGSYETKQTGSASSMVNGVVRLLTKPWDVVPMVTQMAMTDTTPFGQQRVFKEKVDTRTQEPKEGTKKLMKITAEWLWKELGKKKTPRMCTREEFTKKVRSNAALGAIFTDENKWKSAREAVEDSRFWELVDKERNLHLEGKCETCVYNMMGKREKKLGEFGKAKGSRAIWYMWLGARFLEFEALGFLNEDHWFSRENSLSGVEGEGLHKLGYILREVSKKEGGAMYADDTAGWDTRITIEDLKNEEMITNHMAGEHKKLAEAIFKLTYQNKVVRVQRPTPRGTVMDIISRRDQRGSGQVGTYGLNTFTNMEAQLIRQMEGEGIFKSIQHLTASEEIAVQDWLARVGRERLSRMAISGDDCVVKPLDDRFARALTALNDMGKVRKDIQQWEPSRGWNDWTQVPFCSHHFHELIMKDGRTLVVPCRNQDELIGRARISQGAGWSLRETACLGKSYAQMWSLMYFHRRDLRLAANAICSAVPSHWVPTSRTTWSIHASHEWMTTEDMLTVWNKVWILENPWMEDKTPVESWEEIPYLGKREDQWCGSLIGLTSRATWAKNIQTAINQVRSLIGNEEYTDYMPSMKRFRREEEEAGVLW.

The interaction with host EXOC1 stretch occupies residues 1–15; that stretch reads MNDQRKKARNTPFNM. The Cytoplasmic portion of the chain corresponds to 1–101; sequence MNDQRKKARN…LNILNRRRRT (101 aa). The tract at residues 37-72 is hydrophobic; homodimerization of capsid protein C; sequence MLQGRGPLKLFMALVAFLRFLTIPPTAGILKRWGTI. Positions 101–114 are cleaved as a propeptide — ER anchor for the capsid protein C, removed in mature form by serine protease NS3; that stretch reads TAGMIIMLIPTVMA. A helical transmembrane segment spans residues 102-122; the sequence is AGMIIMLIPTVMAFHLTTRNG. Residues 123-238 are Extracellular-facing; it reads EPHMIVSRQE…GAWKHAQRIE (116 aa). N-linked (GlcNAc...) asparagine; by host glycosylation is present at Asn-183. A helical membrane pass occupies residues 239 to 259; the sequence is TWILRHPGFTIMAAILAYTIG. Topologically, residues 260 to 265 are cytoplasmic; it reads TTHFQR. The chain crosses the membrane as a helical span at residues 266-280; it reads VLIFILLTAIAPSMT. At 281 to 725 the chain is on the extracellular side; it reads MRCIGISNRD…LHQVFGAIYG (445 aa). Cystine bridges form between Cys-283-Cys-310, Cys-340-Cys-401, Cys-354-Cys-385, and Cys-372-Cys-396. Asn-347 is a glycosylation site (N-linked (GlcNAc...) asparagine; by host). Residues 378 to 391 are fusion peptide; sequence DRGWGNGCGLFGKG. A glycan (N-linked (GlcNAc...) asparagine; by host) is linked at Asn-433. 2 disulfides stabilise this stretch: Cys-465–Cys-565 and Cys-582–Cys-613. The chain crosses the membrane as a helical span at residues 726-746; that stretch reads AAFSGVSWTMKILIGVIITWI. At 747–752 the chain is on the cytoplasmic side; that stretch reads GMNSRS. The helical transmembrane segment at 753–773 threads the bilayer; that stretch reads TSLSVSLVLVGIVTLYLGVMV. Over 774-1195 the chain is Extracellular; it reads QADSGCVVSW…MVGATMTDDI (422 aa). 6 cysteine pairs are disulfide-bonded: Cys-779/Cys-790, Cys-830/Cys-918, Cys-954/Cys-998, Cys-1055/Cys-1104, Cys-1066/Cys-1088, and Cys-1087/Cys-1091. N-linked (GlcNAc...) asparagine; by host glycans are attached at residues Asn-905 and Asn-982. A glycan (N-linked (GlcNAc...) asparagine; by host) is linked at Asn-1134. A helical membrane pass occupies residues 1196-1220; sequence GMGVTYLALLAAFKVRPTFAAGLLL. Residues 1221-1226 are Cytoplasmic-facing; that stretch reads RKLTSK. Residues 1227-1245 form a helical membrane-spanning segment; that stretch reads ELMMTTIGIVLLSQSSIPE. The Lumenal portion of the chain corresponds to 1246-1269; that stretch reads TILELTDALALGMMVLKMVRNMEK. A helical transmembrane segment spans residues 1270-1290; that stretch reads YQLAVTIMAILCVPNAVILQN. Position 1291 (Ala-1291) is a topological domain, cytoplasmic. A helical transmembrane segment spans residues 1292-1310; the sequence is WKVSCTILAVVSVSPLFLT. Over 1311–1317 the chain is Lumenal; it reads SSQQKAD. Residues 1318-1338 form a helical membrane-spanning segment; the sequence is WIPLALTIKGLNPTAIFLTTL. Residues 1339–1346 are Cytoplasmic-facing; that stretch reads SRTSKKRS. The helical transmembrane segment at 1347–1367 threads the bilayer; it reads WPLNEAIMAVGMVSILASSLL. Over 1368 to 1370 the chain is Lumenal; the sequence is KND. Residues 1371–1391 form a helical membrane-spanning segment; that stretch reads TPMTGPLVAGGLLTVCYVLTG. The Cytoplasmic portion of the chain corresponds to 1392–1447; it reads RSADLELERATDVKWDDQAEISGSSPILSITISEDGSMSIKNEEEEQTLTILIRTG. The tract at residues 1398–1437 is interacts with and activates NS3 protease; the sequence is LERATDVKWDDQAEISGSSPILSITISEDGSMSIKNEEEE. An intramembrane region (helical) is located at residues 1448 to 1468; that stretch reads LLVISGLFPVSIPITAAAWYL. Over 1469 to 2144 the chain is Cytoplasmic; sequence WEVKKQRAGV…LSELPETLET (676 aa). The region spanning 1476–1653 is the Peptidase S7 domain; it reads AGVLWDVPSP…EKSIEDNPEI (178 aa). Catalysis depends on charge relay system; for serine protease NS3 activity residues His-1526, Asp-1550, and Ser-1610. The Helicase ATP-binding domain maps to 1655-1811; it reads DDIFRKRRLT…QSNAPIMDEE (157 aa). The segment at 1659-1662 is important for RNA-binding; sequence RKRR. 1668 to 1675 contacts ATP; it reads LHPGAGKT. The DEAH box motif lies at 1759–1762; that stretch reads DEAH. Residues 1821-1988 enclose the Helicase C-terminal domain; it reads SGHEWVTDFK…IIPSMFEPER (168 aa). N6-acetyllysine; by host is present on Lys-1863. Residues 2145 to 2165 traverse the membrane as a helical segment; that stretch reads LLLLTLLATVTGGIFLFLMSG. At 2166–2167 the chain is on the lumenal side; it reads RG. Residues 2168 to 2188 constitute an intramembrane region (helical); it reads IGKMTLGMCCIITASILLWYA. Residue Gln-2189 is a topological domain, lumenal. Residues 2190 to 2210 traverse the membrane as a helical segment; the sequence is IQPHWIAASIILEFFLIVLLI. Residues 2211-2225 lie on the Cytoplasmic side of the membrane; sequence PEPEKQRTPQDNQLT. The helical transmembrane segment at 2226–2246 threads the bilayer; it reads YVIIAILTVVAATMANEMGFL. The Lumenal portion of the chain corresponds to 2247–2271; it reads EKTKKDLGLGNIATQQPESNILDID. The helical intramembrane region spans 2272–2292; that stretch reads LRPASAWTLYAVATTFITPML. Over 2293–2313 the chain is Lumenal; it reads RHSIENSSVNVSLTAIANQAT. N-linked (GlcNAc...) asparagine; by host glycans are attached at residues Asn-2298 and Asn-2302. Positions 2314–2334 form an intramembrane region, helical; the sequence is VLMGLGKGWPLSKMDIGVPLL. Residues 2335–2344 lie on the Lumenal side of the membrane; it reads AIGCYSQVNP. The helical transmembrane segment at 2345–2365 threads the bilayer; sequence ITLTAALLLLVAHYAIIGPGL. The Cytoplasmic portion of the chain corresponds to 2366–2410; it reads QAKATREAQKRAAAGIMKNPTVDGITVIDLDPIPYDPKFEKQLGQ. Residues 2411–2431 form a helical membrane-spanning segment; sequence VMLLVLCVTQVLMMRTTWALC. The Lumenal portion of the chain corresponds to 2432–2456; sequence EALTLATGPVSTLWEGNPGRFWNTT. Asn-2454 is a glycosylation site (N-linked (GlcNAc...) asparagine; by host). Residues 2457-2477 form a helical membrane-spanning segment; that stretch reads IAVSMANIFRGSYLAGAGLLF. At 2478–3388 the chain is on the cytoplasmic side; the sequence is SIMKNTTSTR…REEEEAGVLW (911 aa). The 263-residue stretch at 2490–2752 folds into the mRNA cap 0-1 NS5-type MT domain; that stretch reads TGNIGETLGE…DVDLGSGTRN (263 aa). Position 2544 (Ser-2544) interacts with S-adenosyl-L-methionine. A Phosphoserine modification is found at Ser-2544. Lys-2549 (for 2'-O-MTase activity) is an active-site residue. The SUMO-interacting motif motif lies at 2565–2568; it reads VVDL. 6 residues coordinate S-adenosyl-L-methionine: Gly-2574, Trp-2575, Thr-2592, Lys-2593, Asp-2619, and Val-2620. Asp-2634 serves as the catalytic For 2'-O-MTase activity. Ile-2635 provides a ligand contact to S-adenosyl-L-methionine. Residues Lys-2669 and Glu-2705 each act as for 2'-O-MTase activity in the active site. Tyr-2707 is a binding site for S-adenosyl-L-methionine. Residues Glu-2926, His-2930, Cys-2935, and Cys-2938 each contribute to the Zn(2+) site. One can recognise a RdRp catalytic domain in the interval 3017-3166; sequence AMYADDTAGW…PLDDRFARAL (150 aa). Zn(2+) contacts are provided by His-3200, Cys-3216, and Cys-3335.

In the N-terminal section; belongs to the class I-like SAM-binding methyltransferase superfamily. mRNA cap 0-1 NS5-type methyltransferase family. Homodimer. Interacts (via N-terminus) with host EXOC1 (via C-terminus); this interaction results in EXOC1 degradation through the proteasome degradation pathway. As to quaternary structure, forms heterodimers with envelope protein E in the endoplasmic reticulum and Golgi. In terms of assembly, homodimer; in the endoplasmic reticulum and Golgi. Interacts with protein prM. Interacts with non-structural protein 1. Homodimer; Homohexamer when secreted. Interacts with envelope protein E. Interacts with host PRKAA1. As to quaternary structure, interacts (via N-terminus) with serine protease NS3. In terms of assembly, forms a heterodimer with serine protease NS3. May form homooligomers. Forms a heterodimer with NS2B. Interacts with NS4B. Interacts with unphosphorylated RNA-directed RNA polymerase NS5; this interaction stimulates RNA-directed RNA polymerase NS5 guanylyltransferase activity. Interacts with host SHFL. As to quaternary structure, interacts with host MAVS; this interaction inhibits the synthesis of IFN-beta. Interacts with host SHFL. Interacts with host AUP1; the interaction occurs in the presence of Dengue virus NS4B and induces lipophagy which facilitates production of virus progeny particles. May interact with host SRPRA and SEC61G. In terms of assembly, interacts with serine protease NS3. Homodimer. Interacts with host STAT2; this interaction inhibits the phosphorylation of the latter, and, when all viral proteins are present (polyprotein), targets STAT2 for degradation. Interacts with serine protease NS3. Interacts with host PAF1 complex; the interaction may prevent the recruitment of the PAF1 complex to interferon-responsive genes, and thus reduces the immune response. Post-translationally, specific enzymatic cleavages in vivo yield mature proteins. Cleavages in the lumen of endoplasmic reticulum are performed by host signal peptidase, whereas cleavages in the cytoplasmic side are performed by serine protease NS3. Signal cleavage at the 2K-4B site requires a prior NS3 protease-mediated cleavage at the 4A-2K site. Cleaved in post-Golgi vesicles by a host furin, releasing the mature small envelope protein M, and peptide pr. This cleavage is incomplete as up to 30% of viral particles still carry uncleaved prM. In terms of processing, N-glycosylated. Post-translationally, N-glycosylated. The excreted form is glycosylated and this is required for efficient secretion of the protein from infected cells. Acetylated by host KAT5. Acetylation modulates NS3 RNA-binding and unwinding activities and plays an important positive role for viral replication. In terms of processing, sumoylation of RNA-directed RNA polymerase NS5 increases NS5 protein stability allowing proper viral RNA replication. Post-translationally, phosphorylated on serines residues. This phosphorylation may trigger NS5 nuclear localization.

It is found in the virion. The protein resides in the host nucleus. Its subcellular location is the host cytoplasm. The protein localises to the host perinuclear region. It localises to the secreted. It is found in the virion membrane. The protein resides in the host endoplasmic reticulum membrane. Its subcellular location is the host mitochondrion. The enzyme catalyses Selective hydrolysis of -Xaa-Xaa-|-Yaa- bonds in which each of the Xaa can be either Arg or Lys and Yaa can be either Ser or Ala.. It catalyses the reaction RNA(n) + a ribonucleoside 5'-triphosphate = RNA(n+1) + diphosphate. The catalysed reaction is a ribonucleoside 5'-triphosphate + H2O = a ribonucleoside 5'-diphosphate + phosphate + H(+). It carries out the reaction ATP + H2O = ADP + phosphate + H(+). The enzyme catalyses a 5'-end (5'-triphosphoguanosine)-ribonucleoside in mRNA + S-adenosyl-L-methionine = a 5'-end (N(7)-methyl 5'-triphosphoguanosine)-ribonucleoside in mRNA + S-adenosyl-L-homocysteine. It catalyses the reaction a 5'-end (N(7)-methyl 5'-triphosphoguanosine)-ribonucleoside in mRNA + S-adenosyl-L-methionine = a 5'-end (N(7)-methyl 5'-triphosphoguanosine)-(2'-O-methyl-ribonucleoside) in mRNA + S-adenosyl-L-homocysteine + H(+). Plays a role in virus budding by binding to the cell membrane and gathering the viral RNA into a nucleocapsid that forms the core of a mature virus particle. During virus entry, may induce genome penetration into the host cytoplasm after hemifusion induced by the surface proteins. Can migrate to the cell nucleus where it modulates host functions. Overcomes the anti-viral effects of host EXOC1 by sequestering and degrading the latter through the proteasome degradation pathway. Its function is as follows. Inhibits RNA silencing by interfering with host Dicer. Functionally, prevents premature fusion activity of envelope proteins in trans-Golgi by binding to envelope protein E at pH6.0. After virion release in extracellular space, gets dissociated from E dimers. In terms of biological role, acts as a chaperone for envelope protein E during intracellular virion assembly by masking and inactivating envelope protein E fusion peptide. prM is the only viral peptide matured by host furin in the trans-Golgi network probably to avoid catastrophic activation of the viral fusion activity in acidic Golgi compartment prior to virion release. prM-E cleavage is inefficient, and many virions are only partially matured. These uncleaved prM would play a role in immune evasion. May play a role in virus budding. Exerts cytotoxic effects by activating a mitochondrial apoptotic pathway through M ectodomain. May display a viroporin activity. Its function is as follows. Binds to host cell surface receptor and mediates fusion between viral and cellular membranes. Envelope protein is synthesized in the endoplasmic reticulum in the form of heterodimer with protein prM. They play a role in virion budding in the ER, and the newly formed immature particle is covered with 60 spikes composed of heterodimer between precursor prM and envelope protein E. The virion is transported to the Golgi apparatus where the low pH causes dissociation of PrM-E heterodimers and formation of E homodimers. prM-E cleavage is inefficient, and many virions are only partially matured. These uncleaved prM would play a role in immune evasion. Functionally, involved in immune evasion, pathogenesis and viral replication. Once cleaved off the polyprotein, is targeted to three destinations: the viral replication cycle, the plasma membrane and the extracellular compartment. Essential for viral replication. Required for formation of the replication complex and recruitment of other non-structural proteins to the ER-derived membrane structures. Excreted as a hexameric lipoparticle that plays a role against host immune response. Antagonizing the complement function. Binds to the host macrophages and dendritic cells. Inhibits signal transduction originating from Toll-like receptor 3 (TLR3). Mediates complement activation, which may contribute to the pathogenesis of the vascular leakage that occurs in severe dengue disease. Activates autophagy through the AMPK/ERK/mTOR signaling pathway. Mechanistically, acts as the assembly platform for STK11-AMPK interactions and promotes STK11-AMPK interactions. In turn, promotes phosphorylation of the AMPK kinase structural domain and activates AMPK, thereby positively regulating the AMPK/ERK/mTOR signaling pathway and inducing autophagy. In terms of biological role, disrupts the host endothelial glycocalyx layer of host pulmonary microvascular endothelial cells, inducing degradation of sialic acid and shedding of heparan sulfate proteoglycans. NS1 induces expression of sialidases, heparanase, and activates cathepsin L, which activates heparanase via enzymatic cleavage. These effects are probably linked to the endothelial hyperpermeability observed in severe dengue disease. Component of the viral RNA replication complex that functions in virion assembly and antagonizes the host immune response. Its function is as follows. Required cofactor for the serine protease function of NS3. May have membrane-destabilizing activity and form viroporins. Functionally, displays three enzymatic activities: serine protease, NTPase and RNA helicase. NS3 serine protease, in association with NS2B, performs its autocleavage and cleaves the polyprotein at dibasic sites in the cytoplasm: C-prM, NS2A-NS2B, NS2B-NS3, NS3-NS4A, NS4A-2K and NS4B-NS5. NS3 RNA helicase binds RNA and unwinds dsRNA in the 3' to 5' direction. In terms of biological role, regulates the ATPase activity of the NS3 helicase activity. NS4A allows NS3 helicase to conserve energy during unwinding. Plays a role in the inhibition of the host innate immune response. Interacts with host MAVS and thereby prevents the interaction between RIGI and MAVS. In turn, IFN-beta production is impaired. Interacts with host AUP1 which mediates induction of lipophagy in host cells and facilitates production of virus progeny particles. Functions as a signal peptide for NS4B and is required for the interferon antagonism activity of the latter. Its function is as follows. Induces the formation of ER-derived membrane vesicles where the viral replication takes place. Inhibits interferon (IFN)-induced host STAT1 phosphorylation and nuclear translocation, thereby preventing the establishment of cellular antiviral state by blocking the IFN-alpha/beta pathway. Functionally, replicates the viral (+) and (-) RNA genome, and performs the capping of genomes in the cytoplasm. NS5 methylates viral RNA cap at guanine N-7 and ribose 2'-O positions. Besides its role in RNA genome replication, also prevents the establishment of cellular antiviral state by blocking the interferon-alpha/beta (IFN-alpha/beta) signaling pathway. Inhibits host TYK2 and STAT2 phosphorylation, thereby preventing activation of JAK-STAT signaling pathway. May reduce immune responses by preventing the recruitment of the host PAF1 complex to interferon-responsive genes. The chain is Genome polyprotein from Aedimorphus (Red guenon).